Reading from the N-terminus, the 421-residue chain is Tol-Pal system protein TolA (421 aa).

The Cytoplasmic segment spans residues 1 to 13; the sequence is MSKATEQNDKLKR. The chain crosses the membrane as a helical span at residues 14–34; that stretch reads AIIISAVLHVILFAALIWSSF. At 35 to 421 the chain is on the periplasmic side; sequence DENIEASAGG…FKNAPLDFKP (387 aa). Residues 48–310 form a domain II (alpha-helical) region; it reads SSIDAVMVDS…LSSGKNAPKT (263 aa). The disordered stretch occupies residues 65–266; it reads KRMQSQESSA…KAAADKKAAA (202 aa). Basic and acidic residues-rich tracts occupy residues 73–175 and 206–266; these read SAKR…EAEA and EARK…KAAA. Tandem repeats lie at residues 224–229, 230–234, 235–240, 241–245, 246–250, 251–255, 256–260, 261–266, 267–271, 272–277, 278–282, 283–287, and 288–292. A 13 X tandem repeats of [EDA]-K(1,2)-A(2,4) region spans residues 224–292; it reads EKKAAAEKAA…EKAAAAKAAA (69 aa). Residues 300–336 form a disordered region; it reads ELSSGKNAPKTGGGAKGNNASPAGSGNTKNNGASGAD. The segment at 311–421 is domain III (functional); that stretch reads GGGAKGNNAS…FKNAPLDFKP (111 aa). Residues 317-332 are compositionally biased toward polar residues; the sequence is NNASPAGSGNTKNNGA. C363 and C388 are joined by a disulfide.

Belongs to the TolA family. As to quaternary structure, the Tol-Pal system is composed of five core proteins: the inner membrane proteins TolA, TolQ and TolR, the periplasmic protein TolB and the outer membrane protein Pal. They form a network linking the inner and outer membranes and the peptidoglycan layer. TolA interacts with TolQ and TolR via its N-terminal domain. Interacts with CpoB, and with the trimeric porins OmpC, OmpF, PhoE and LamB via its central domain. Interacts with TolB via its C-terminal domain. Also interacts with Pal via its C-terminal domain. This interaction is proton motive force dependent and requires TolQ and TolR.

It localises to the cell inner membrane. Functionally, part of the Tol-Pal system, which plays a role in outer membrane invagination during cell division and is important for maintaining outer membrane integrity. The Tol-Pal system is also required for polar localization of chemoreceptors clusters. The system also appears to be required for the activity of several outer membrane-localized enzymes with cell wall remodeling activity. Is involved in the uptake of group A colicins (colicins A, E1, E2, E3, and K) and in the uptake of filamentous phage DNA. In Escherichia coli (strain K12), this protein is Tol-Pal system protein TolA.